The primary structure comprises 356 residues: Magnesium-protoporphyrin IX monomethyl ester [oxidative] cyclase (356 aa).

The protein belongs to the AcsF family. Requires Fe cation as cofactor.

The catalysed reaction is Mg-protoporphyrin IX 13-monomethyl ester + 3 NADPH + 3 O2 + 2 H(+) = 3,8-divinyl protochlorophyllide a + 3 NADP(+) + 5 H2O. The protein operates within porphyrin-containing compound metabolism; chlorophyll biosynthesis (light-independent). Functionally, catalyzes the formation of the isocyclic ring in chlorophyll biosynthesis. Mediates the cyclase reaction, which results in the formation of divinylprotochlorophyllide (Pchlide) characteristic of all chlorophylls from magnesium-protoporphyrin IX 13-monomethyl ester (MgPMME). The sequence is that of Magnesium-protoporphyrin IX monomethyl ester [oxidative] cyclase from Parasynechococcus marenigrum (strain WH8102).